We begin with the raw amino-acid sequence, 384 residues long: tRNA-specific 2-thiouridylase MnmA (384 aa).

ATP contacts are provided by residues 9-16 (GMSGGVDS) and Met-35. Positions 95-97 (NPD) are interaction with target base in tRNA. The active-site Nucleophile is the Cys-100. Residues Cys-100 and Cys-196 are joined by a disulfide bond. ATP is bound at residue Gly-124. The interval 146 to 148 (KDQ) is interaction with tRNA. The Cysteine persulfide intermediate role is filled by Cys-196. The interaction with tRNA stretch occupies residues 308-309 (RY).

It belongs to the MnmA/TRMU family.

The protein resides in the cytoplasm. The catalysed reaction is S-sulfanyl-L-cysteinyl-[protein] + uridine(34) in tRNA + AH2 + ATP = 2-thiouridine(34) in tRNA + L-cysteinyl-[protein] + A + AMP + diphosphate + H(+). Functionally, catalyzes the 2-thiolation of uridine at the wobble position (U34) of tRNA, leading to the formation of s(2)U34. The protein is tRNA-specific 2-thiouridylase MnmA of Burkholderia vietnamiensis (strain G4 / LMG 22486) (Burkholderia cepacia (strain R1808)).